A 108-amino-acid chain; its full sequence is MRSMSFEEAIKSLDSGIIVDIEVTPGSRSLSVPSGYNEWRKRIEVKLTRNAQKGKANEQLIESLAELFGICSSDIFISSGATSSKKSLLIKGVSYQQAVLVFGKHLKG.

Belongs to the UPF0235 family.

The chain is UPF0235 protein MM_0822 from Methanosarcina mazei (strain ATCC BAA-159 / DSM 3647 / Goe1 / Go1 / JCM 11833 / OCM 88) (Methanosarcina frisia).